A 416-amino-acid chain; its full sequence is Serine hydroxymethyltransferase (416 aa).

Residues Leu-118 and 122-124 (GHL) contribute to the (6S)-5,6,7,8-tetrahydrofolate site. An N6-(pyridoxal phosphate)lysine modification is found at Lys-226. Residues Glu-242 and 350–352 (SPF) contribute to the (6S)-5,6,7,8-tetrahydrofolate site.

Belongs to the SHMT family. Homodimer. The cofactor is pyridoxal 5'-phosphate.

It localises to the cytoplasm. It catalyses the reaction (6R)-5,10-methylene-5,6,7,8-tetrahydrofolate + glycine + H2O = (6S)-5,6,7,8-tetrahydrofolate + L-serine. It participates in one-carbon metabolism; tetrahydrofolate interconversion. Its pathway is amino-acid biosynthesis; glycine biosynthesis; glycine from L-serine: step 1/1. Functionally, catalyzes the reversible interconversion of serine and glycine with tetrahydrofolate (THF) serving as the one-carbon carrier. This reaction serves as the major source of one-carbon groups required for the biosynthesis of purines, thymidylate, methionine, and other important biomolecules. Also exhibits THF-independent aldolase activity toward beta-hydroxyamino acids, producing glycine and aldehydes, via a retro-aldol mechanism. This chain is Serine hydroxymethyltransferase, found in Helicobacter pylori (strain Shi470).